A 179-amino-acid chain; its full sequence is GTP-dependent dephospho-CoA kinase (179 aa).

The GTP site is built by aspartate 50, valine 51, valine 52, aspartate 69, lysine 71, and glutamate 126.

Belongs to the GTP-dependent DPCK family.

The catalysed reaction is 3'-dephospho-CoA + GTP = GDP + CoA + H(+). It functions in the pathway cofactor biosynthesis; coenzyme A biosynthesis. Catalyzes the GTP-dependent phosphorylation of the 3'-hydroxyl group of dephosphocoenzyme A to form coenzyme A (CoA). This is GTP-dependent dephospho-CoA kinase from Pyrococcus horikoshii (strain ATCC 700860 / DSM 12428 / JCM 9974 / NBRC 100139 / OT-3).